The following is a 419-amino-acid chain: UDP-N-acetylglucosamine 1-carboxyvinyltransferase (419 aa).

22–23 (KN) is a binding site for phosphoenolpyruvate. UDP-N-acetyl-alpha-D-glucosamine is bound at residue Arg93. Catalysis depends on Cys117, which acts as the Proton donor. Cys117 bears the 2-(S-cysteinyl)pyruvic acid O-phosphothioketal mark. UDP-N-acetyl-alpha-D-glucosamine contacts are provided by residues 122–126 (RPVDQ), Asp305, and Ile327.

Belongs to the EPSP synthase family. MurA subfamily.

Its subcellular location is the cytoplasm. It carries out the reaction phosphoenolpyruvate + UDP-N-acetyl-alpha-D-glucosamine = UDP-N-acetyl-3-O-(1-carboxyvinyl)-alpha-D-glucosamine + phosphate. It participates in cell wall biogenesis; peptidoglycan biosynthesis. Its function is as follows. Cell wall formation. Adds enolpyruvyl to UDP-N-acetylglucosamine. The sequence is that of UDP-N-acetylglucosamine 1-carboxyvinyltransferase from Dichelobacter nodosus (strain VCS1703A).